Reading from the N-terminus, the 110-residue chain is UPF0122 protein SH1678 (110 aa).

This sequence belongs to the UPF0122 family.

In terms of biological role, might take part in the signal recognition particle (SRP) pathway. This is inferred from the conservation of its genetic proximity to ftsY/ffh. May be a regulatory protein. In Staphylococcus haemolyticus (strain JCSC1435), this protein is UPF0122 protein SH1678.